The chain runs to 63 residues: Lantibiotic mutacin-1140 (63 aa).

Residues 1–41 (MSNTQLLEVLGTETFDVQEDLFAFDTTDTTIVASNDDPDTR) constitute a propeptide that is removed on maturation. Residues 44-48 (SWSLC) constitute a cross-link (lanthionine (Ser-Cys)). Serine 46 is modified (2,3-didehydroalanine (Ser)). The beta-methyllanthionine (Thr-Cys) cross-link spans 49 to 52 (TPGC). Residue threonine 55 is modified to 2,3-didehydrobutyrine. The lanthionine (Ser-Cys) cross-link spans 57–62 (SFNSYC). The segment at residues 60–63 (SYCC) is a cross-link (S-(2-aminovinyl)-D-cysteine (Ser-Cys)).

The protein belongs to the type A lantibiotic family. Post-translationally, maturation of lantibiotics involves the enzymatic conversion of Thr, and Ser into dehydrated AA and the formation of thioether bonds with cysteine. The C-terminal lanthionine undergoes decarboxylation. This is followed by membrane translocation and cleavage of the modified precursor. In terms of processing, the structure of the 2,3-didehydrobutyrine is not discussed in PubMed:11082191.

In terms of biological role, lanthionine-containing peptide antibiotic (lantibiotic) active on Gram-positive bacteria. The bactericidal activity of lantibiotics is based on depolarization of energized bacterial cytoplasmic membranes, initiated by the formation of aqueous transmembrane pores. The sequence is that of Lantibiotic mutacin-1140 (lanA) from Streptococcus mutans.